The chain runs to 422 residues: UDP-N-acetylglucosamine 1-carboxyvinyltransferase (422 aa).

22–23 serves as a coordination point for phosphoenolpyruvate; that stretch reads KN. Residue R93 coordinates UDP-N-acetyl-alpha-D-glucosamine. C117 serves as the catalytic Proton donor. C117 carries the post-translational modification 2-(S-cysteinyl)pyruvic acid O-phosphothioketal. Residues 122 to 126, 162 to 165, D307, and I329 each bind UDP-N-acetyl-alpha-D-glucosamine; these read RPVDL and KVSV.

The protein belongs to the EPSP synthase family. MurA subfamily.

The protein localises to the cytoplasm. The catalysed reaction is phosphoenolpyruvate + UDP-N-acetyl-alpha-D-glucosamine = UDP-N-acetyl-3-O-(1-carboxyvinyl)-alpha-D-glucosamine + phosphate. Its pathway is cell wall biogenesis; peptidoglycan biosynthesis. Cell wall formation. Adds enolpyruvyl to UDP-N-acetylglucosamine. The polypeptide is UDP-N-acetylglucosamine 1-carboxyvinyltransferase (Hamiltonella defensa subsp. Acyrthosiphon pisum (strain 5AT)).